Here is a 104-residue protein sequence, read N- to C-terminus: SOSS complex subunit C (104 aa).

Position 2 is an N-acetylalanine (Ala2). Ser50 carries the phosphoserine modification.

The protein belongs to the SOSS-C family. In terms of assembly, component of the SOSS complex, composed of SOSS-B (SOSS-B1/NABP2 or SOSS-B2/NABP1), SOSS-A/INTS3 and SOSS-C/INIP. SOSS complexes containing SOSS-B1/NABP2 are more abundant than complexes containing SOSS-B2/NABP1. Interacts with INTS3; the interaction is direct.

The protein resides in the nucleus. Its function is as follows. Component of the SOSS complex, a multiprotein complex that functions downstream of the MRN complex to promote DNA repair and G2/M checkpoint. The SOSS complex associates with single-stranded DNA at DNA lesions and influences diverse endpoints in the cellular DNA damage response including cell-cycle checkpoint activation, recombinational repair and maintenance of genomic stability. Required for efficient homologous recombination-dependent repair of double-strand breaks (DSBs) and ATM-dependent signaling pathways. This Mus musculus (Mouse) protein is SOSS complex subunit C (Inip).